The chain runs to 448 residues: Probable glycine dehydrogenase (decarboxylating) subunit 1 (448 aa).

This sequence belongs to the GcvP family. N-terminal subunit subfamily. In terms of assembly, the glycine cleavage system is composed of four proteins: P, T, L and H. In this organism, the P 'protein' is a heterodimer of two subunits.

It catalyses the reaction N(6)-[(R)-lipoyl]-L-lysyl-[glycine-cleavage complex H protein] + glycine + H(+) = N(6)-[(R)-S(8)-aminomethyldihydrolipoyl]-L-lysyl-[glycine-cleavage complex H protein] + CO2. Functionally, the glycine cleavage system catalyzes the degradation of glycine. The P protein binds the alpha-amino group of glycine through its pyridoxal phosphate cofactor; CO(2) is released and the remaining methylamine moiety is then transferred to the lipoamide cofactor of the H protein. The sequence is that of Probable glycine dehydrogenase (decarboxylating) subunit 1 from Listeria monocytogenes serotype 4a (strain HCC23).